A 515-amino-acid chain; its full sequence is Leucine-rich repeat transmembrane neuronal protein 2 (515 aa).

The first 33 residues, 1–33 (MGLHFKWPLGAPMLAAIYAMSVVLKMLPALGMA), serve as a signal peptide directing secretion. Residues 34–421 (CPPKCRCEKL…EPDNAIFTQR (388 aa)) lie on the Extracellular side of the membrane. Asparagine 57 carries an N-linked (GlcNAc...) asparagine glycan. LRR repeat units lie at residues 61–83 (KGSL…QFAS), 84–107 (FSQL…AFQG), 109–131 (YKLK…TFTQ), 132–155 (LINL…LFYG), 156–179 (LRKL…LFWD), 181–203 (RSLE…GFAG), 205–227 (IKLR…HFLR), 229–251 (SSLH…MEWT), 252–275 (WSTL…VFET), and 276–299 (MPNL…ILSS). N-linked (GlcNAc...) asparagine glycosylation occurs at asparagine 126. A glycan (N-linked (GlcNAc...) asparagine) is linked at asparagine 243. Residue asparagine 362 is glycosylated (N-linked (GlcNAc...) asparagine). The helical transmembrane segment at 422-442 (VITGTMALLFSFFFIIFIVFI) threads the bilayer. Residues 443–515 (SRKCCPPTLR…QQLPYKECEV (73 aa)) are Cytoplasmic-facing. An Involved in DLG4-binding motif is present at residues 512-515 (ECEV).

Belongs to the LRRTM family. Interacts with DLG4. Interacts with neurexin NRXN1; interaction is mediated by heparan sulfate glycan modification on neurexin. Expressed in neuronal tissues. Widely distributed in neuropil regions in discrete puncta throughout the brain (at protein level). Detected in cortex, thalamus, striatum, olfactory bulb, cerebellum and all hippocampal subfields (at protein level). More abundant in deep than in superficial layers of neocortex (at protein level).

It is found in the cell membrane. The protein resides in the postsynaptic cell membrane. In terms of biological role, involved in the development and maintenance of excitatory synapses in the nervous system. Regulates surface expression of AMPA receptors and instructs the development of functional glutamate release sites. Acts as a ligand for the presynaptic receptors NRXN1-A and NRXN1-B. The sequence is that of Leucine-rich repeat transmembrane neuronal protein 2 (Lrrtm2) from Rattus norvegicus (Rat).